Consider the following 436-residue polypeptide: Histidine--tRNA ligase (436 aa).

This sequence belongs to the class-II aminoacyl-tRNA synthetase family. As to quaternary structure, homodimer.

It localises to the cytoplasm. It carries out the reaction tRNA(His) + L-histidine + ATP = L-histidyl-tRNA(His) + AMP + diphosphate + H(+). This Psychrobacter sp. (strain PRwf-1) protein is Histidine--tRNA ligase.